Consider the following 294-residue polypeptide: Nucleotide-binding protein Dtur_1129 (294 aa).

An ATP-binding site is contributed by 10–17 (GLSGAGKS). 61 to 64 (DIRT) serves as a coordination point for GTP.

This sequence belongs to the RapZ-like family.

Displays ATPase and GTPase activities. The sequence is that of Nucleotide-binding protein Dtur_1129 from Dictyoglomus turgidum (strain DSM 6724 / Z-1310).